Consider the following 147-residue polypeptide: Hemoglobin subunit beta-Y (147 aa).

A Globin domain is found at 3–147; the sequence is HFTAEEKAAI…VANALSLKYH (145 aa). Histidine 64 and histidine 93 together coordinate heme b.

The protein belongs to the globin family. As to quaternary structure, heterotetramer of two alpha chains and two beta chains.

Functionally, this is a minor early embryonic beta chain. This chain is Hemoglobin subunit beta-Y (HBBY), found in Mesocricetus auratus (Golden hamster).